The following is a 512-amino-acid chain: MKNTYYITTPIYYVNDVPHIGHAYTSVASDVIARFIRLCGFDVMFLTGTDEHGQKVEKAAINKNIDPQKFTDHTSESFRHLMNVMNISNDDFIRTTESRHKEAVAIFWQKLLDNGTIYEGFYEGWYAVRDEAFFDESELTSDGLAPTGAPVEWVKEPSYFFNLSKWQDKLLEFYEANPDFIRPISRRNEVISFVKSGLKDLSVSRTTFNWGIKVPNNEKHVIYVWLDALASYISALGYPDKQSNYGKFWPADLHVVGKDILRFHAVYWPAFLMAAEIPLPKTIMAHGWWTNEGQKISKSLGNTIDPIKLIDEFGVDQVRYFLMREVTFGADGNFARSNLVTRINSELSNKIGNLLQRTTAFVYKNNDGKVPLLMQGIIDKIYELPILKTASKFAEQNILLMEKTEINKVLENIINLSEEANIYIDSEAPWNLKKTDPEKMSEVLYTLLEVLRYIAIMLQPFIPSSANKMLDQLGVNKEERLFKHLIRDYALRAGSSILEPAIIFPRFEGDVV.

The short motif at tyrosine 12–histidine 22 is the 'HIGH' region element. The 'KMSKS' region motif lies at lysine 295–serine 299. Residue lysine 298 participates in ATP binding.

The protein belongs to the class-I aminoacyl-tRNA synthetase family. MetG type 2B subfamily. Monomer.

The protein resides in the cytoplasm. The enzyme catalyses tRNA(Met) + L-methionine + ATP = L-methionyl-tRNA(Met) + AMP + diphosphate. Its function is as follows. Is required not only for elongation of protein synthesis but also for the initiation of all mRNA translation through initiator tRNA(fMet) aminoacylation. This chain is Methionine--tRNA ligase, found in Rickettsia felis (strain ATCC VR-1525 / URRWXCal2) (Rickettsia azadi).